The sequence spans 521 residues: Interleukin-9 receptor (521 aa).

An N-terminal signal peptide occupies residues 1–40 (MGLGRCIWEGWTLESEALRRDMGTWLLACICICTCVCLGV). Residues 41 to 270 (SVTGEGQGPR…GPLIPPWGWP (230 aa)) are Extracellular-facing. Residues Asn-117 and Asn-156 are each glycosylated (N-linked (GlcNAc...) asparagine). The 111-residue stretch at 149–259 (PPSDLQSNIS…QPVCFQAPQR (111 aa)) folds into the Fibronectin type-III domain. The short motif at 245-249 (WSEWS) is the WSXWS motif element. The chain crosses the membrane as a helical span at residues 271-291 (GNTLVAVSIFLLLTGPTYLLF). The Cytoplasmic segment spans residues 292–521 (KLSPRVKRIF…VLSKARSWTF (230 aa)). The Box 1 motif motif lies at 301–309 (FYQNVPSPA). Positions 413-439 (WAPTSLTRPAPPDSEGSRSSSSSSSSN) are disordered. Residues 429 to 439 (SRSSSSSSSSN) are compositionally biased toward low complexity.

It belongs to the type I cytokine receptor family. Type 4 subfamily. Interacts with IL9.

It localises to the cell membrane. It is found in the secreted. In terms of biological role, plays an important role in the immune response against parasites by acting as a receptor of IL9. The polypeptide is Interleukin-9 receptor (IL9R) (Homo sapiens (Human)).